Here is a 607-residue protein sequence, read N- to C-terminus: Polyadenylate-binding protein 1-like (607 aa).

RRM domains are found at residues 11 to 89 (SSLY…WSHR), 99 to 175 (GNIF…HFKS), 191 to 268 (TNIY…RAQK), and 294 to 370 (VNLY…LAQR). Positions 523 to 600 (HQPLTVSMLA…AVAVLQVHRE (78 aa)) constitute a PABC domain.

It belongs to the polyadenylate-binding protein type-1 family. As to expression, expressed in ovary and testis.

It is found in the cytoplasm. Poly(A)-binding protein involved in oocyte maturation and early embryo development. It is required for cytosolic mRNA polyadenylation and translational activation of maternally stored mRNA in oocytes. In Mus musculus (Mouse), this protein is Polyadenylate-binding protein 1-like.